The following is a 360-amino-acid chain: Cannabinoid receptor 2 (360 aa).

At 1-33 (MEECWVTEIANGSKDGLDSNPMKDYMILSGPQK) the chain is on the extracellular side. Residue N11 is glycosylated (N-linked (GlcNAc...) asparagine). A helical membrane pass occupies residues 34 to 59 (TAVAVLCTLLGLLSALENVAVLYLIL). Over 60-71 (SSHQLRRKPSYL) the chain is Cytoplasmic. A helical membrane pass occupies residues 72–92 (FIGSLAGADFLASVVFACSFV). Over 93–104 (NFHVFHGVDSKA) the chain is Extracellular. The helical transmembrane segment at 105 to 129 (VFLLKIGSVTMTFTASVGSLLLTAI) threads the bilayer. Residues 130–149 (DRYLCLRYPPSYKALLTRGR) are Cytoplasmic-facing. The helical transmembrane segment at 150-172 (ALVTLGIMWVLSALVSYLPLMGW) threads the bilayer. The Extracellular segment spans residues 173–188 (TCCPRPCSELFPLIPN). Residues 189–214 (DYLLSWLLFIAFLFSGIIYTYGHVLW) form a helical membrane-spanning segment. Topologically, residues 215-246 (KAHQHVASLSGHQDRQVPGMARMRLDVRLAKT) are cytoplasmic. The helical transmembrane segment at 247–267 (LGLVLAVLLICWFPVLALMAH) threads the bilayer. Over 268-279 (SLATTLSDQVKK) the chain is Extracellular. A helical transmembrane segment spans residues 280–301 (AFAFCSMLCLINSMVNPVIYAL). Topologically, residues 302–360 (RSGEIRSSAHHCLAHWKKCVRGLGSEAKEEAPRSSVTETEADGKITPWPDSRDLDLSDC) are cytoplasmic. The segment at 327–360 (EAKEEAPRSSVTETEADGKITPWPDSRDLDLSDC) is disordered. Phosphoserine occurs at positions 335 and 336. A Phosphothreonine modification is found at T338. Residues 351-360 (DSRDLDLSDC) are compositionally biased toward basic and acidic residues. S352 carries the post-translational modification Phosphoserine.

This sequence belongs to the G-protein coupled receptor 1 family. Post-translationally, constitutively phosphorylated on Ser-352; phosphorylation increases cell internalization and desensitizes the receptor. In terms of tissue distribution, preferentially expressed in cells of the immune system with higher expression in B-cells and NK cells (at protein level). Expressed in skin in suprabasal layers and hair follicles (at protein level). Highly expressed in tonsil and to a lower extent in spleen, peripheral blood mononuclear cells, and thymus. PubMed:14657172 could not detect expression in normal brain. Expressed in brain by perivascular microglial cells and dorsal root ganglion sensory neurons (at protein level). Two isoforms are produced by alternative promoter usage and differ only in the 5' UTR: isoform CB2A is observed predominantly in testis with some expression in brain, while isoform CB2B is predominant in spleen and leukocytes.

It is found in the cell membrane. It localises to the cell projection. The protein localises to the dendrite. Its subcellular location is the perikaryon. Functionally, heterotrimeric G protein-coupled receptor for endocannabinoid 2-arachidonoylglycerol mediating inhibition of adenylate cyclase. May function in inflammatory response, nociceptive transmission and bone homeostasis. The polypeptide is Cannabinoid receptor 2 (CNR2) (Homo sapiens (Human)).